Here is a 390-residue protein sequence, read N- to C-terminus: S-adenosylmethionine synthase 2 (390 aa).

Glu9 contacts Mg(2+). His15 provides a ligand contact to ATP. A K(+)-binding site is contributed by Glu43. L-methionine contacts are provided by Glu56 and Gln99. ATP is bound by residues 167-169, 235-238, Asp246, 252-253, Ala269, Lys273, and Lys277; these read DGK, SGRF, and RK. An L-methionine-binding site is contributed by Asp246. Lys277 contributes to the L-methionine binding site.

This sequence belongs to the AdoMet synthase family. As to quaternary structure, homotetramer. Mn(2+) serves as cofactor. It depends on Mg(2+) as a cofactor. Requires Co(2+) as cofactor. The cofactor is K(+).

Its subcellular location is the cytoplasm. The enzyme catalyses L-methionine + ATP + H2O = S-adenosyl-L-methionine + phosphate + diphosphate. Its pathway is amino-acid biosynthesis; S-adenosyl-L-methionine biosynthesis; S-adenosyl-L-methionine from L-methionine: step 1/1. In terms of biological role, catalyzes the formation of S-adenosylmethionine from methionine and ATP. The reaction comprises two steps that are both catalyzed by the same enzyme: formation of S-adenosylmethionine (AdoMet) and triphosphate, and subsequent hydrolysis of the triphosphate. The protein is S-adenosylmethionine synthase 2 (METK2) of Solanum tuberosum (Potato).